Reading from the N-terminus, the 173-residue chain is Lipoprotein signal peptidase (173 aa).

2 consecutive transmembrane segments (helical) span residues 67-87 (WISLLVSVGLCVYALVGPHLG) and 92-112 (MGFGLLLGGAVGNGFDRFAFG). Active-site residues include aspartate 116 and aspartate 132. Residues 125 to 145 (FPVFNGADIAINLGLACLLIG) traverse the membrane as a helical segment. The interval 151–173 (SRTPAPARPASKQIREPTDTTGG) is disordered. Positions 163–173 (QIREPTDTTGG) are enriched in basic and acidic residues.

Belongs to the peptidase A8 family.

The protein resides in the cell inner membrane. The enzyme catalyses Release of signal peptides from bacterial membrane prolipoproteins. Hydrolyzes -Xaa-Yaa-Zaa-|-(S,diacylglyceryl)Cys-, in which Xaa is hydrophobic (preferably Leu), and Yaa (Ala or Ser) and Zaa (Gly or Ala) have small, neutral side chains.. It functions in the pathway protein modification; lipoprotein biosynthesis (signal peptide cleavage). Functionally, this protein specifically catalyzes the removal of signal peptides from prolipoproteins. The protein is Lipoprotein signal peptidase of Gloeobacter violaceus (strain ATCC 29082 / PCC 7421).